The following is a 911-amino-acid chain: Viral IRF4-like protein (911 aa).

The IRF tryptophan pentad repeat DNA-binding region spans Ser-7–Arg-114. Disordered stretches follow at residues Thr-147 to Ser-184, Ala-211 to Pro-302, Gly-494 to Cys-537, and Glu-681 to Pro-727. Over residues Ala-211 to Thr-221 the composition is skewed to low complexity. Polar residues-rich tracts occupy residues Arg-222–Thr-231 and Gly-495–Gln-505. The segment covering Arg-697 to Pro-710 has biased composition (basic residues).

Belongs to the IRF family. As to quaternary structure, interacts with host MDM2; this interaction facilitates the proteasomal degradation of TP53/p53. Interacts with host IRF7; this interaction prevents IRF7 dimerization and subsequent activation.

It localises to the host nucleus. Functionally, plays a role in host cell apoptosis modulation by promoting TP53/p53 ubiquitination and subsequent degradation and thus down-regulating TP53/p53-mediated apoptosis. Works as a potential viral transcription factor to modulate host gene expression to build favorable environments for the viral lytic life cycle and greatly accelerates the induction of an immediate early gene RTA, early genes ORF36 and ORF57, late genes ORF25 and ORF64, and latent genes LANA1 and v-IRF3. Inhibits host interferon-alpha production by interacting with host IRF7 and preventing IRF7 dimerization. The chain is Viral IRF4-like protein (vIRF-4) from Homo sapiens (Human).